Reading from the N-terminus, the 178-residue chain is Large ribosomal subunit protein uL6 (178 aa).

It belongs to the universal ribosomal protein uL6 family. As to quaternary structure, part of the 50S ribosomal subunit.

This protein binds to the 23S rRNA, and is important in its secondary structure. It is located near the subunit interface in the base of the L7/L12 stalk, and near the tRNA binding site of the peptidyltransferase center. The chain is Large ribosomal subunit protein uL6 from Thermoplasma acidophilum (strain ATCC 25905 / DSM 1728 / JCM 9062 / NBRC 15155 / AMRC-C165).